The sequence spans 953 residues: Translation initiation factor IF-2 (953 aa).

2 disordered regions span residues 48–248 and 279–363; these read SSFS…AELA and TKLK…TERK. 3 stretches are compositionally biased toward basic and acidic residues: residues 80–89, 98–111, and 140–188; these read TGSEHAEKTQ, FKAE…EQAA, and QGDK…ENHK. The span at 191–207 shows a compositional bias: polar residues; sequence RFTNQKKQGRQEPQSKS. The segment covering 229 to 248 has biased composition (basic and acidic residues); that stretch reads RQSETRFRAQQEAKRLAELA. Positions 282–291 are enriched in polar residues; sequence KSSNISAKST. Over residues 300 to 317 the composition is skewed to basic and acidic residues; the sequence is ARPEKNRELTHHSQEGQK. The span at 322-338 shows a compositional bias: low complexity; it reads SWNSQNQVRNQKNSNWN. Basic residues predominate over residues 339 to 348; that stretch reads KNKKTKKGKN. A tr-type G domain is found at 454–623; that stretch reads ERAPVVTIMG…LLVAEVEELK (170 aa). The segment at 463–470 is G1; sequence GHVDHGKT. 463-470 contacts GTP; that stretch reads GHVDHGKT. Residues 488-492 are G2; that stretch reads GITQH. Residues 509–512 are G3; that stretch reads DTPG. GTP contacts are provided by residues 509–513 and 563–566; these read DTPGH and NKID. The interval 563–566 is G4; that stretch reads NKID. The segment at 599–601 is G5; the sequence is SAK.

It belongs to the TRAFAC class translation factor GTPase superfamily. Classic translation factor GTPase family. IF-2 subfamily.

Its subcellular location is the cytoplasm. One of the essential components for the initiation of protein synthesis. Protects formylmethionyl-tRNA from spontaneous hydrolysis and promotes its binding to the 30S ribosomal subunits. Also involved in the hydrolysis of GTP during the formation of the 70S ribosomal complex. The protein is Translation initiation factor IF-2 of Streptococcus pyogenes serotype M18 (strain MGAS8232).